Reading from the N-terminus, the 1199-residue chain is DNA-directed RNA polymerase subunit beta (1199 aa).

The segment at 1175–1199 is disordered; it reads EEKKAHEAAAQATDGKSANSTDDKK. Polar residues predominate over residues 1188 to 1199; sequence DGKSANSTDDKK.

Belongs to the RNA polymerase beta chain family. As to quaternary structure, the RNAP catalytic core consists of 2 alpha, 1 beta, 1 beta' and 1 omega subunit. When a sigma factor is associated with the core the holoenzyme is formed, which can initiate transcription.

The catalysed reaction is RNA(n) + a ribonucleoside 5'-triphosphate = RNA(n+1) + diphosphate. In terms of biological role, DNA-dependent RNA polymerase catalyzes the transcription of DNA into RNA using the four ribonucleoside triphosphates as substrates. The sequence is that of DNA-directed RNA polymerase subunit beta from Lacticaseibacillus paracasei (strain ATCC 334 / BCRC 17002 / CCUG 31169 / CIP 107868 / KCTC 3260 / NRRL B-441) (Lactobacillus paracasei).